The sequence spans 452 residues: Translation initiation factor eIF2B subunit gamma (452 aa).

Position 1 is an N-acetylmethionine (methionine 1). Phosphoserine is present on serine 261.

Belongs to the eIF-2B gamma/epsilon subunits family. As to quaternary structure, component of the translation initiation factor 2B (eIF2B) complex which is a heterodecamer of two sets of five different subunits: alpha, beta, gamma, delta and epsilon. Subunits alpha, beta and delta comprise a regulatory subcomplex and subunits epsilon and gamma comprise a catalytic subcomplex. Within the complex, the hexameric regulatory complex resides at the center, with the two heterodimeric catalytic subcomplexes bound on opposite sides.

It localises to the cytoplasm. Its subcellular location is the cytosol. Activated by the chemical integrated stress response (ISR) inhibitor ISRIB which stimulates guanine nucleotide exchange factor activity for both phosphorylated and unphosphorylated eIF2. Its function is as follows. Acts as a component of the translation initiation factor 2B (eIF2B) complex, which catalyzes the exchange of GDP for GTP on the eukaryotic initiation factor 2 (eIF2) complex gamma subunit. Its guanine nucleotide exchange factor activity is repressed when bound to eIF2 complex phosphorylated on the alpha subunit, thereby limiting the amount of methionyl-initiator methionine tRNA available to the ribosome and consequently global translation is repressed. The polypeptide is Translation initiation factor eIF2B subunit gamma (EIF2B3) (Bos taurus (Bovine)).